Here is an 83-residue protein sequence, read N- to C-terminus: Putative defensin-like protein 257 (83 aa).

The first 25 residues, 1-25, serve as a signal peptide directing secretion; it reads MMNVSLKLSFLVFILVIMSNLGSEA. 3 disulfide bridges follow: cysteine 57–cysteine 73, cysteine 63–cysteine 80, and cysteine 67–cysteine 82.

This sequence belongs to the DEFL family.

It localises to the secreted. This chain is Putative defensin-like protein 257, found in Arabidopsis thaliana (Mouse-ear cress).